The chain runs to 525 residues: GMP synthase [glutamine-hydrolyzing] (525 aa).

Positions threonine 13–asparagine 202 constitute a Glutamine amidotransferase type-1 domain. Residue cysteine 89 is the Nucleophile of the active site. Residues histidine 176 and glutamate 178 contribute to the active site. Positions tryptophan 203–arginine 400 constitute a GMPS ATP-PPase domain. Serine 231 to threonine 237 serves as a coordination point for ATP. Lysine 241 is covalently cross-linked (Glycyl lysine isopeptide (Lys-Gly) (interchain with G-Cter in ubiquitin)). Arginine 304 serves as a coordination point for XMP. A Glycyl lysine isopeptide (Lys-Gly) (interchain with G-Cter in ubiquitin) cross-link involves residue lysine 426. Residues aspartate 462, lysine 517, and glutamate 523 each contribute to the XMP site.

As to quaternary structure, homodimer. It depends on Mg(2+) as a cofactor.

It localises to the cytoplasm. The protein localises to the cytosol. It carries out the reaction XMP + L-glutamine + ATP + H2O = GMP + L-glutamate + AMP + diphosphate + 2 H(+). It participates in purine metabolism; GMP biosynthesis; GMP from XMP (L-Gln route): step 1/1. In terms of biological role, catalyzes the conversion of xanthine monophosphate (XMP) to GMP in the presence of glutamine and ATP through an adenyl-XMP intermediate. The polypeptide is GMP synthase [glutamine-hydrolyzing] (Saccharomyces cerevisiae (strain ATCC 204508 / S288c) (Baker's yeast)).